The primary structure comprises 325 residues: Acetyl-coenzyme A carboxylase carboxyl transferase subunit beta (325 aa).

In terms of domain architecture, CoA carboxyltransferase N-terminal spans 24-293 (LWIKCPDSGH…AEIEVVTPEP (270 aa)).

This sequence belongs to the AccD/PCCB family. In terms of assembly, acetyl-CoA carboxylase is a heterohexamer composed of biotin carboxyl carrier protein (AccB), biotin carboxylase (AccC) and two subunits each of ACCase subunit alpha (AccA) and ACCase subunit beta (AccD).

The protein localises to the cytoplasm. It carries out the reaction N(6)-carboxybiotinyl-L-lysyl-[protein] + acetyl-CoA = N(6)-biotinyl-L-lysyl-[protein] + malonyl-CoA. It functions in the pathway lipid metabolism; malonyl-CoA biosynthesis; malonyl-CoA from acetyl-CoA: step 1/1. Its function is as follows. Component of the acetyl coenzyme A carboxylase (ACC) complex. Biotin carboxylase (BC) catalyzes the carboxylation of biotin on its carrier protein (BCCP) and then the CO(2) group is transferred by the transcarboxylase to acetyl-CoA to form malonyl-CoA. The polypeptide is Acetyl-coenzyme A carboxylase carboxyl transferase subunit beta (Rhodopseudomonas palustris (strain BisA53)).